The sequence spans 317 residues: Fe-S cluster assembly protein dre2 (317 aa).

The N-terminal SAM-like domain stretch occupies residues 22 to 152 (PVQAKRTLLL…KPNFEPSAAV (131 aa)). The linker stretch occupies residues 153–209 (PLKFGLKKKNKPTPTAVPSIPTGFAAPMGIDSPVTNHDRDEDDELINEDTLLSEEDL). Residues Cys219, Cys230, Cys233, and Cys235 each coordinate [2Fe-2S] cluster. Residues 219–235 (CQPKTGRRRRACKDCTC) are fe-S binding site A. Residues Cys280, Cys283, Cys291, and Cys294 each contribute to the [4Fe-4S] cluster site. 2 consecutive short sequence motifs (cx2C motif) follow at residues 280 to 283 (CGSC) and 291 to 294 (CDGC). Positions 280–294 (CGSCALGDAFRCDGC) are fe-S binding site B.

This sequence belongs to the anamorsin family. In terms of assembly, monomer. Interacts with tah18. Interacts with mia40. Requires [2Fe-2S] cluster as cofactor. The cofactor is [4Fe-4S] cluster.

It localises to the cytoplasm. The protein localises to the mitochondrion intermembrane space. Component of the cytosolic iron-sulfur (Fe-S) protein assembly (CIA) machinery required for the maturation of extramitochondrial Fe-S proteins. Part of an electron transfer chain functioning in an early step of cytosolic Fe-S biogenesis, facilitating the de novo assembly of a [4Fe-4S] cluster on the scaffold complex cfd1-nbp35. Electrons are transferred to dre2 from NADPH via the FAD- and FMN-containing protein tah18. Tah18-dre2 are also required for the assembly of the diferric tyrosyl radical cofactor of ribonucleotide reductase (RNR), probably by providing electrons for reduction during radical cofactor maturation in the catalytic small subunit rnr2. This chain is Fe-S cluster assembly protein dre2, found in Penicillium rubens (strain ATCC 28089 / DSM 1075 / NRRL 1951 / Wisconsin 54-1255) (Penicillium chrysogenum).